Here is a 176-residue protein sequence, read N- to C-terminus: Oxaleimides biosynthesis cluster protein N (176 aa).

4 helical membrane passes run 5-25 (LLVVSAGSLALKVLRVTPLIT), 71-91 (VWTGVISIVLFTRVALILNLF), 104-124 (FLYGVGLFLSFAHLSVAPKML), and 155-175 (FWIVDVPFWVVGVWATLEGLK).

It is found in the membrane. It participates in secondary metabolite biosynthesis. Part of the gene cluster that mediates the biosynthesis of oxaleimides, cytotoxic compounds containing an unusual disubstituted succinimide moiety. The first step of the pathway is provided by the HR-PKS poxF that serves in a new mode of collaborative biosynthesis with the PKS-NRPS poxE, by providing the olefin containing amino acid substrate via the synthesis of an ACP-bound dec-4-enoate. The cytochrome P450 monooxygenase poxM-catalyzed oxidation at the alpha-position creates the enzyme-bound 2-hydroxydec-4-enoyl-ACP thioester, which may be prone to spontaneous hydrolysis to yield 2-hydroxydec-4-enoic acid due to increased electrophilicity of the carbonyl. 2-hydroxydec-4-enoic acid can then be further oxidized by poxM to yield the alpha-ketoacid 2-oxodec-4-enoicacid, which is reductively aminated by the aminotransferase poxL to yield (S,E)-2-aminodec-4-enoic acid. The Hybrid PKS-NRPS synthetase poxE then performs condensation between the octaketide product of its PKS modules and the amino group of (S,E)-2-aminodec-4-enoic acid which is activated and incorporated by the adenylation domain. The resulting aminoacyl product can be cyclized by the Diels-Alderase PoxQ and reductively released by the reductive (R) domain of poxE to yield an aldehyde intermediate. The released aldehyde is then substrate for a Knoevenagel condensation by the hydrolyase poxO followed by an oxidation at the 5-position of the pyrrolidone ring. The presence of the olefin from the amino acid building block allows for migration of the substituted allyl group to occur. This allylic transposition reaction takes place in a conjugate addition, semipinacol-like fashion to yield a succinimide intermediate. Iterative two-electron oxidations of the C7 methyl of the succinimide intermediate to the carboxylic acid can be catalyzed by one of two remaining cytochrome P450 monooxygenasess poxC or poxD to yield oxaleimide A. Subsequent oxidation yields the maleimide scaffold oxaleimide I. Both oxaleimide A and oxaleimide I can undergo oxidative modifications in the decalin ring to yield the series of products oxaleimides B to H. In Penicillium oxalicum (strain 114-2 / CGMCC 5302) (Penicillium decumbens), this protein is Oxaleimides biosynthesis cluster protein N.